A 1071-amino-acid polypeptide reads, in one-letter code: Exportin-1 (1071 aa).

The 67-residue stretch at 46–112 folds into the Importin N-terminal domain; sequence AQEVLTHLKE…KKYVVGLIIK (67 aa). HEAT repeat units lie at residues 217-240, 241-277, 354-472, 515-553, 560-597, and 602-639; these read QNAP…PLGY, IFET…VSVS, MLLV…YVDT, RFLV…QYPR, KFLK…KCRR, and VQVG…AVGY. A necessary for interaction with Ran and nuclear export complex formation region spans residues 327-450; that stretch reads CTFLKEHGQL…VREFMKDTDS (124 aa). At serine 391 the chain carries Phosphoserine. The necessary for interaction with RANBP3 stretch occupies residues 411 to 481; sequence TVLSKVRLLM…TEIIMTKKLQ (71 aa). Lysine 446 is modified (N6-acetyllysine). A Phosphothreonine modification is found at threonine 448. A Phosphoserine modification is found at serine 450. Tyrosine 454 is modified (phosphotyrosine). N6-acetyllysine is present on lysine 693. HEAT repeat units lie at residues 775–813, 885–916, and 917–954; these read NFVP…KLGG, TMRN…SFYQ, and TYFC…NLVE. Phosphoserine occurs at positions 966 and 1031. An HEAT 10 repeat occupies 1002-1039; it reads FSLNQDIPAFKEHLRDFLVQIKEFAGEDTSDLFLEERE.

Belongs to the exportin family. As to quaternary structure, found in a U snRNA export complex with PHAX/RNUXA, NCBP1/CBP80, NCBP2/CBP20, RAN, XPO1 and m7G-capped RNA. Component of a nuclear export receptor complex composed of KPNB1, RAN, SNUPN and XPO1. Found in a trimeric export complex with SNUPN, RAN and XPO1. Found in a nuclear export complex with RANBP3 and RAN. Found in a 60S ribosomal subunit export complex with NMD3, RAN, XPO1. Interacts with DDX3X, NMD3, NUP42, NUP88, NUP214, RANBP3 and TERT. Interacts with NEMF (via its N-terminus). Interacts with the monomeric form of BIRC5/survivin deacetylated at 'Lys-129'. Interacts with DTNBP1 and SERTAD2; the interactions translocate DTNBP1 and SERTAD2 out of the nucleus. Interacts with ATF2. Interacts with SLC35G1 and STIM1. Interacts with DCAF8. Interacts with CPEB3. Interacts with HAX1. Interacts with BOK; translocates to the cytoplasm. Interacts with HSP90AB1. Interacts with LRPPRC; interacts with LRPPRC alone and also when LRPPRC is in complex with EIF4E and with EIF4E sensitivity element (4ESE)-containing mRNAs to form an EIF4E-dependent mRNA export complex.

It localises to the cytoplasm. It is found in the nucleus. Its subcellular location is the nucleoplasm. The protein resides in the cajal body. The protein localises to the nucleolus. Functionally, mediates the nuclear export of cellular proteins (cargos) bearing a leucine-rich nuclear export signal (NES) and of RNAs. In the nucleus, in association with RANBP3, binds cooperatively to the NES on its target protein and to the GTPase Ran in its active GTP-bound form. Docking of this complex to the nuclear pore complex (NPC) is mediated through binding to nucleoporins. Upon transit of a nuclear export complex into the cytoplasm, disassembling of the complex and hydrolysis of Ran-GTP to Ran-GDP (induced by RANBP1 and RANGAP1, respectively) cause release of the cargo from the export receptor. The directionality of nuclear export is thought to be conferred by an asymmetric distribution of the GTP- and GDP-bound forms of Ran between the cytoplasm and nucleus. Involved in U3 snoRNA transport from Cajal bodies to nucleoli. Binds to late precursor U3 snoRNA bearing a TMG cap. In Rattus norvegicus (Rat), this protein is Exportin-1 (Xpo1).